The following is a 538-amino-acid chain: Protein NRT1/ PTR FAMILY 5.11 (538 aa).

2 helical membrane passes run 44 to 64 and 74 to 94; these read FAYFGIASNLIMYLTGPLGES and AWTGTVAFLPLLGGFLADSYL. T99 is subject to Phosphothreonine. The next 10 membrane-spanning stretches (helical) occupy residues 100–120, 134–154, 175–194, 204–224, 308–328, 342–362, 389–409, 424–444, 463–483, and 507–527; these read IIISSSLYILGLGLLSFSTMI, TIFFFSLYLVAIGQGGYNPCI, SFFNWLMFGNCISILTTRLV, WSLGFGIPSVSMLLSLFLFLL, IPIWITSVVYTIVHAQSPTFF, GLLVPAATLQSFINLSVVVFI, IGTGIFLSILAMVLAALVETK, VWWLIPQYVIFGVSDMFTMVG, ALNLSIYGAGNYLSSFMISVI, and YFYWLLACLGFIGFAFYLWFA.

The protein belongs to the major facilitator superfamily. Proton-dependent oligopeptide transporter (POT/PTR) (TC 2.A.17) family. As to expression, expressed in shoots and roots.

Its subcellular location is the membrane. This is Protein NRT1/ PTR FAMILY 5.11 (NPF5.11) from Arabidopsis thaliana (Mouse-ear cress).